The following is a 293-amino-acid chain: MSPLADHRFLKMNGLGNEIVVLDLRASSHVVRPEEARAIAADPRSRFDQLMVLHDPVTPGTDARLRIYNRDGSESGACGNGTRCVAWAMRADPVMGRAGEQLTLESAAGLLAVTRVSDTDFTVDMGPPHLRWDEIPLSEPFPDTRRIELQIGPIDAPILHSPGVVSMGNPHAVFFVDRDPETYDLGRIGPLLEAHPLFPERANISLAQVVAADRIRLRVWERGAGLTRACGSAACAALVAAARLRLTGRRATVTLPGGDLVIAWGEDDHVRMTGPTELEWEGRFPPALFAGAA.

Residues Asn-17, Gln-49, and Asn-69 each coordinate substrate. The Proton donor role is filled by Cys-78. Residues 79–80 (GN), Asn-169, Asn-203, and 221–222 (ER) each bind substrate. Cys-230 functions as the Proton acceptor in the catalytic mechanism. 231 to 232 (GS) contacts substrate.

This sequence belongs to the diaminopimelate epimerase family. As to quaternary structure, homodimer.

Its subcellular location is the cytoplasm. The enzyme catalyses (2S,6S)-2,6-diaminopimelate = meso-2,6-diaminopimelate. The protein operates within amino-acid biosynthesis; L-lysine biosynthesis via DAP pathway; DL-2,6-diaminopimelate from LL-2,6-diaminopimelate: step 1/1. Functionally, catalyzes the stereoinversion of LL-2,6-diaminopimelate (L,L-DAP) to meso-diaminopimelate (meso-DAP), a precursor of L-lysine and an essential component of the bacterial peptidoglycan. The sequence is that of Diaminopimelate epimerase from Methylobacterium sp. (strain 4-46).